The sequence spans 159 residues: NADH-quinone oxidoreductase subunit I (159 aa).

4Fe-4S ferredoxin-type domains lie at 51–80 and 90–119; these read RRYE…IEAD and TRYD…EGPN. Cys-60, Cys-63, Cys-66, Cys-70, Cys-99, Cys-102, Cys-105, and Cys-109 together coordinate [4Fe-4S] cluster.

Belongs to the complex I 23 kDa subunit family. NDH-1 is composed of 14 different subunits. Subunits NuoA, H, J, K, L, M, N constitute the membrane sector of the complex. It depends on [4Fe-4S] cluster as a cofactor.

The protein resides in the cell inner membrane. The catalysed reaction is a quinone + NADH + 5 H(+)(in) = a quinol + NAD(+) + 4 H(+)(out). Functionally, NDH-1 shuttles electrons from NADH, via FMN and iron-sulfur (Fe-S) centers, to quinones in the respiratory chain. The immediate electron acceptor for the enzyme in this species is believed to be ubiquinone. Couples the redox reaction to proton translocation (for every two electrons transferred, four hydrogen ions are translocated across the cytoplasmic membrane), and thus conserves the redox energy in a proton gradient. This is NADH-quinone oxidoreductase subunit I from Rickettsia rickettsii (strain Sheila Smith).